We begin with the raw amino-acid sequence, 418 residues long: Serine hydroxymethyltransferase (418 aa).

Residues Leu121 and 125-127 (GHL) contribute to the (6S)-5,6,7,8-tetrahydrofolate site. Lys230 bears the N6-(pyridoxal phosphate)lysine mark. Position 355–357 (355–357 (SPF)) interacts with (6S)-5,6,7,8-tetrahydrofolate.

It belongs to the SHMT family. As to quaternary structure, homodimer. It depends on pyridoxal 5'-phosphate as a cofactor.

Its subcellular location is the cytoplasm. The catalysed reaction is (6R)-5,10-methylene-5,6,7,8-tetrahydrofolate + glycine + H2O = (6S)-5,6,7,8-tetrahydrofolate + L-serine. It functions in the pathway one-carbon metabolism; tetrahydrofolate interconversion. It participates in amino-acid biosynthesis; glycine biosynthesis; glycine from L-serine: step 1/1. Catalyzes the reversible interconversion of serine and glycine with tetrahydrofolate (THF) serving as the one-carbon carrier. This reaction serves as the major source of one-carbon groups required for the biosynthesis of purines, thymidylate, methionine, and other important biomolecules. Also exhibits THF-independent aldolase activity toward beta-hydroxyamino acids, producing glycine and aldehydes, via a retro-aldol mechanism. The polypeptide is Serine hydroxymethyltransferase (Streptococcus pyogenes serotype M1).